Consider the following 92-residue polypeptide: Large ribosomal subunit protein eL43 (92 aa).

Residues 39-60 (CSFCGKKTVRRGAAGIWSCHSC) form a C4-type zinc finger.

The protein belongs to the eukaryotic ribosomal protein eL43 family.

The polypeptide is Large ribosomal subunit protein eL43 (RPL43) (Candida glabrata (strain ATCC 2001 / BCRC 20586 / JCM 3761 / NBRC 0622 / NRRL Y-65 / CBS 138) (Yeast)).